The chain runs to 529 residues: Meiosis 1 arrest protein (529 aa).

Disordered regions lie at residues 180–201 (KGIQ…DESS) and 504–529 (AASK…PSHT). Over residues 188 to 200 (SPSPTEEPSNDES) the composition is skewed to polar residues. Ser516 carries the phosphoserine modification.

Expressed in germ cells of the testis. Expressed from spermatogonia to spermatids. Expressed at very low levels in lung, stomach, thymus. Not detected in Sertoli cells.

Its subcellular location is the cytoplasm. Functionally, required for meiosis I progression during spermatogenesis. This is Meiosis 1 arrest protein (M1ap) from Mus musculus (Mouse).